A 296-amino-acid chain; its full sequence is Class E basic helix-loop-helix protein 22 (296 aa).

A disordered region spans residues 26-70 (SAFRPPQGLDLSQPGDRSPLHCYDGPDPSDLLRHHQHHHQASSGA). Residues 153–207 (TLRLNINARERRRMHDLNDALDELRAVIPYAHSPSVRKLSKIATLLLAKNYILMQ) enclose the bHLH domain.

Its subcellular location is the nucleus. Functionally, may act as a transcriptional repressor. The sequence is that of Class E basic helix-loop-helix protein 22 (bhlhe22) from Xenopus tropicalis (Western clawed frog).